A 69-amino-acid chain; its full sequence is MELKASEFGVVLSVDALKLSRQSPLGVGIGGGGGGGGGGSCGGQGGGCGGCSNGCSGGNGGSGGSGSHI.

Positions 1 to 26 are excised as a propeptide; the sequence is MELKASEFGVVLSVDALKLSRQSPLG. The oxazole-4-carboxylic acid (Gly-Ser) cross-link spans 39 to 40; it reads GS. Positions 40–41 form a cross-link, thiazole-4-carboxylic acid (Ser-Cys); that stretch reads SC. 3 consecutive cross-links (thiazole-4-carboxylic acid (Gly-Cys)) follow at residues 47 to 48, 50 to 51, and 54 to 55; these read GC. The segment at residues 55–56 is a cross-link (oxazole-4-carboxylic acid (Cys-Ser)); that stretch reads CS. 2 cross-links (oxazole-4-carboxylic acid (Gly-Ser)) span residues 61 to 62 and 64 to 65; these read GS.

The processed N-terminus does not resemble a typical secretion signal sequence. In terms of processing, maturation of thiazole and oxazole containing antibiotics involves the enzymatic condensation of a Cys, Ser or Thr with the alpha-carbonyl of the preceding amino acid to form a thioether or ether bond, then dehydration to form a double bond with the alpha-amino nitrogen. Thiazoline or oxazoline rings are dehydrogenated to form thiazole or oxazole rings.

Functionally, this glycine-rich peptide antibiotic inhibits DNA replication in many enteric bacteria, that leads to induction of the SOS repair system, massive DNA degradation and cell death. B17 inhibits type II topoisomerase by trapping an enzyme - DNA cleavable complex. The chain is Bacteriocin microcin B17 (mcbA) from Escherichia coli.